Here is a 281-residue protein sequence, read N- to C-terminus: sn-glycerol-3-phosphate transport system permease protein UgpE (281 aa).

Transmembrane regions (helical) follow at residues Leu-16 to Leu-36, Phe-85 to Phe-105, Phe-113 to Val-133, Leu-142 to Phe-162, Ala-202 to Ile-222, and Trp-247 to Ala-267. The 192-residue stretch at Met-77–Met-268 folds into the ABC transmembrane type-1 domain.

Belongs to the binding-protein-dependent transport system permease family. UgpAE subfamily. As to quaternary structure, the complex is composed of two ATP-binding proteins (UgpC), two transmembrane proteins (UgpA and UgpE) and a solute-binding protein (UgpB).

It is found in the cell inner membrane. Part of the ABC transporter complex UgpBAEC involved in sn-glycerol-3-phosphate (G3P) import. Probably responsible for the translocation of the substrate across the membrane. This is sn-glycerol-3-phosphate transport system permease protein UgpE (ugpE) from Salmonella typhi.